We begin with the raw amino-acid sequence, 617 residues long: BTB/POZ domain-containing protein At3g08570 (617 aa).

The BTB domain maps to 36–106 (GDITIVVDGE…CYGINFEITI (71 aa)). An NPH3 domain is found at 210–490 (EWWIEDLSAL…VRVLYSEQLR (281 aa)). Y431 bears the Phosphotyrosine mark. 2 disordered regions span residues 505–525 (LSSQKHSSENPSRAVSPRDTY) and 585–617 (GGGPTEGKLRNANRKSKSRLERKTVRSRPESMF). Over residues 602-617 (SRLERKTVRSRPESMF) the composition is skewed to basic and acidic residues.

The protein belongs to the NPH3 family.

It functions in the pathway protein modification; protein ubiquitination. In terms of biological role, may act as a substrate-specific adapter of an E3 ubiquitin-protein ligase complex (CUL3-RBX1-BTB) which mediates the ubiquitination and subsequent proteasomal degradation of target proteins. The protein is BTB/POZ domain-containing protein At3g08570 of Arabidopsis thaliana (Mouse-ear cress).